A 145-amino-acid chain; its full sequence is Peptide methionine sulfoxide reductase MsrB (145 aa).

In terms of domain architecture, MsrB spans 4–127 (SEELKQRIGD…NSAALKFIPY (124 aa)). Cys-116 (nucleophile) is an active-site residue.

It belongs to the MsrB Met sulfoxide reductase family.

It catalyses the reaction L-methionyl-[protein] + [thioredoxin]-disulfide + H2O = L-methionyl-(R)-S-oxide-[protein] + [thioredoxin]-dithiol. The polypeptide is Peptide methionine sulfoxide reductase MsrB (Streptococcus pyogenes serotype M6 (strain ATCC BAA-946 / MGAS10394)).